We begin with the raw amino-acid sequence, 62 residues long: uncharacterized protein (62 aa).

This is an uncharacterized protein from Homo sapiens (Human).